A 228-amino-acid polypeptide reads, in one-letter code: DNA mismatch repair protein MutH (228 aa).

The protein belongs to the MutH family.

The protein resides in the cytoplasm. Its function is as follows. Sequence-specific endonuclease that cleaves unmethylated GATC sequences. It is involved in DNA mismatch repair. This Yersinia pseudotuberculosis serotype O:1b (strain IP 31758) protein is DNA mismatch repair protein MutH.